Consider the following 465-residue polypeptide: Citrate synthase-like protein (465 aa).

The interval 13–40 (HISDMVDSTKMNGNQSQDTAGRADTPVS) is disordered. The segment covering 21-31 (TKMNGNQSQDT) has biased composition (polar residues). Residues histidine 357 and aspartate 413 contribute to the active site.

The protein belongs to the citrate synthase family.

The protein operates within secondary metabolite biosynthesis. Functionally, citrate synthase-like protein; part of the gene cluster that mediates the biosynthesis of squalestatin S1 (SQS1, also known as zaragozic acid A), a heavily oxidized fungal polyketide that offers potent cholesterol lowering activity by targeting squalene synthase (SS). SQS1 is composed of a 2,8-dioxobicyclic[3.2.1]octane-3,4,5-tricarboxyclic acid core that is connected to two lipophilic polyketide arms. These initial steps feature the priming of an unusual benzoic acid starter unit onto the highly reducing polyketide synthase pks2, followed by oxaloacetate extension and product release to generate a tricarboxylic acid containing product. The phenylalanine ammonia lyase (PAL) M7 and the acyl-CoA ligase M9 are involved in transforming phenylalanine into benzoyl-CoA. The citrate synthase-like protein R3 is involved in connecting the C-alpha-carbons of the hexaketide chain and oxaloacetate to afford the tricarboxylic acid unit. The potential hydrolytic enzymes, M8 and M10, are in close proximity to pks2 and may participate in product release. On the other side, the tetraketide arm is synthesized by a the squalestatin tetraketide synthase pks1 and enzymatically esterified to the core in the last biosynthetic step, by the acetyltransferase M4. The biosynthesis of the tetraketide must involve 3 rounds of chain extension. After the first and second rounds methyl-transfer occurs, and in all rounds of extension the ketoreductase and dehydratase are active. The enoyl reductase and C-MeT of pks1 are not active in the final round of extension. The acetyltransferase M4 appears to have a broad substrate selectivity for its acyl CoA substrate, allowing the in vitro synthesis of novel squalestatins. The biosynthesis of SQS1 requires several oxidative steps likely performed by oxidoreductases M1, R1 and R2. Finally, in support of the identification of the cluster as being responsible for SQS1 production, the cluster contains a gene encoding a putative squalene synthase (SS) R6, suggesting a likely mechanism for self-resistance. The chain is Citrate synthase-like protein from Phoma sp. (strain ATCC 20986 / MF5453).